The following is a 74-amino-acid chain: U3-agatoxin-Ao1d (74 aa).

Positions 1–20 (MKAAISLLLLSALLFVVIEA) are cleaved as a signal peptide. Residues 21 to 34 (ITYEEGKELFQGER) constitute a propeptide that is removed on maturation. 4 cysteine pairs are disulfide-bonded: C37/C53, C44/C58, C52/C68, and C60/C66. A Serine amide modification is found at S72.

This sequence belongs to the neurotoxin 07 (Beta/delta-agtx) family. 02 (aga-3) subfamily. In terms of tissue distribution, expressed by the venom gland.

It localises to the secreted. Functionally, insecticidal neurotoxin that induces an irreversible spastic paralysis when injected into insects. Modifies presynaptic voltage-gated sodium channels (Nav), causing them to open at the normal resting potential of the nerve. This leads to spontaneous release of neurotransmitter and repetitive action potentials in motor neurons. The protein is U3-agatoxin-Ao1d of Agelena orientalis (Funnel-web spider).